Here is a 490-residue protein sequence, read N- to C-terminus: Nicotinate phosphoribosyltransferase (490 aa).

His206 carries the phosphohistidine modification.

The protein belongs to the NAPRTase family. Post-translationally, transiently phosphorylated on a His residue during the reaction cycle. Phosphorylation strongly increases the affinity for substrates and increases the rate of nicotinate D-ribonucleotide production. Dephosphorylation regenerates the low-affinity form of the enzyme, leading to product release.

It catalyses the reaction nicotinate + 5-phospho-alpha-D-ribose 1-diphosphate + ATP + H2O = nicotinate beta-D-ribonucleotide + ADP + phosphate + diphosphate. Its pathway is cofactor biosynthesis; NAD(+) biosynthesis; nicotinate D-ribonucleotide from nicotinate: step 1/1. In terms of biological role, catalyzes the synthesis of beta-nicotinate D-ribonucleotide from nicotinate and 5-phospho-D-ribose 1-phosphate at the expense of ATP. The chain is Nicotinate phosphoribosyltransferase (pncB) from Bacillus subtilis (strain 168).